A 79-amino-acid chain; its full sequence is Sulfur carrier protein TusA (79 aa).

Cys17 functions as the Cysteine persulfide intermediate in the catalytic mechanism.

The protein belongs to the sulfur carrier protein TusA family.

It is found in the cytoplasm. Its function is as follows. Sulfur carrier protein which probably makes part of a sulfur-relay system. This Pseudoalteromonas translucida (strain TAC 125) protein is Sulfur carrier protein TusA.